The primary structure comprises 636 residues: Poly(3-hydroxyalkanoate) polymerase subunit PhaC (636 aa).

Disordered stretches follow at residues 1 to 38 and 129 to 152; these read MYNKRIKRVLPPEEMVTDSKQESGGQKNGDKTGFDATD and QGTRGMQGEPLPPEPDTRKDKRFS. Residues 143–152 show a composition bias toward basic and acidic residues; it reads PDTRKDKRFS. Cys373 is a catalytic residue.

This sequence belongs to the PHA/PHB synthase family. Type I PhaC subfamily.

It localises to the cytoplasm. The catalysed reaction is (3R)-3-hydroxybutanoyl-CoA + [(3R)-hydroxybutanoate](n) = [(3R)-hydroxybutanoate](n+1) + CoA. The protein operates within biopolymer metabolism; poly-(R)-3-hydroxybutanoate biosynthesis. Its function is as follows. Polymerizes D(-)-3-hydroxybutyryl-CoA to create PHB which consists of thousands of hydroxybutyrate molecules linked end to end. PHB serves as an intracellular energy reserve material when cells grow under conditions of nutrient limitation. The polypeptide is Poly(3-hydroxyalkanoate) polymerase subunit PhaC (Rhizobium etli (strain ATCC 51251 / DSM 11541 / JCM 21823 / NBRC 15573 / CFN 42)).